Consider the following 243-residue polypeptide: Small ribosomal subunit protein uS3 (243 aa).

The KH type-2 domain occupies 39–107 (MRKFVMSELK…ETHLNIVEVR (69 aa)). Residues 214–243 (ASERRAMEGDAQGPASRDRDRDRDRRRDNA) are disordered. A compositionally biased stretch (basic and acidic residues) spans 229–243 (SRDRDRDRDRRRDNA).

The protein belongs to the universal ribosomal protein uS3 family. In terms of assembly, part of the 30S ribosomal subunit. Forms a tight complex with proteins S10 and S14.

Binds the lower part of the 30S subunit head. Binds mRNA in the 70S ribosome, positioning it for translation. In Rhizobium johnstonii (strain DSM 114642 / LMG 32736 / 3841) (Rhizobium leguminosarum bv. viciae), this protein is Small ribosomal subunit protein uS3.